We begin with the raw amino-acid sequence, 47 residues long: Potassium channel toxin TcoKIK (47 aa).

Positions 14–47 (EYACPAIDKFCEDHCAAKKAVGKCDDFKCNCIKL) constitute a BetaSPN-type CS-alpha/beta domain. Cystine bridges form between cysteine 17–cysteine 37, cysteine 24–cysteine 42, and cysteine 28–cysteine 44.

This sequence belongs to the long chain scorpion toxin family. Class 2 subfamily. In terms of tissue distribution, expressed by the venom gland.

Its subcellular location is the secreted. It localises to the target cell membrane. Functionally, blocks voltage-gated potassium channels. Its application (10 uM) to cells recombinantly expressing channels results in membrane damage and cell lysis. The protein is Potassium channel toxin TcoKIK of Tityus costatus (Brazilian scorpion).